The sequence spans 728 residues: Catalase-peroxidase 1 (728 aa).

A signal peptide spans 1–22; it reads MDKTQSSQGKCPVMHGANSAVA. The tryptophyl-tyrosyl-methioninium (Trp-Tyr) (with M-251) cross-link spans 97 to 225; sequence WHSAGTYRVA…LAAVMMGLIY (129 aa). Residue H98 is the Proton acceptor of the active site. A cross-link (tryptophyl-tyrosyl-methioninium (Tyr-Met) (with W-97)) is located at residues 225 to 251; it reads YVNPEGVDGKPDPLRTAQDVRVTFARM. H266 serves as a coordination point for heme b.

The protein belongs to the peroxidase family. Peroxidase/catalase subfamily. Homodimer or homotetramer. Heme b is required as a cofactor. Formation of the three residue Trp-Tyr-Met cross-link is important for the catalase, but not the peroxidase activity of the enzyme.

It catalyses the reaction H2O2 + AH2 = A + 2 H2O. The catalysed reaction is 2 H2O2 = O2 + 2 H2O. Bifunctional enzyme with both catalase and broad-spectrum peroxidase activity. The chain is Catalase-peroxidase 1 from Shewanella sp. (strain MR-7).